An 82-amino-acid chain; its full sequence is Small ribosomal subunit protein bS16 (82 aa).

This sequence belongs to the bacterial ribosomal protein bS16 family.

This Erwinia tasmaniensis (strain DSM 17950 / CFBP 7177 / CIP 109463 / NCPPB 4357 / Et1/99) protein is Small ribosomal subunit protein bS16.